The sequence spans 315 residues: Polyprenyl transferase mpaA (315 aa).

The next 8 membrane-spanning stretches (helical) occupy residues 40–60, 84–103, 118–135, 143–163, 174–194, 224–244, 248–268, and 279–299; these read IEFI…LCGA, LASG…GQYF, IWSL…YPYL, VFVY…ITGW, GDII…CVYF, LFLA…ISTI, WLWV…IAQF, and IHWD…VEVG.

It belongs to the UbiA prenyltransferase family. Requires Mg(2+) as cofactor.

The protein localises to the golgi apparatus membrane. The enzyme catalyses 5,7-dihydroxy-4-methylphthalide + (2E,6E)-farnesyl diphosphate = 4-farnesyl-3,5-dihydroxy-6-methylphthalide + diphosphate. The protein operates within secondary metabolite biosynthesis; terpenoid biosynthesis. Functionally, polyprenyl transferase; part of the gene cluster that mediates the biosynthesis of mycophenolic acid (MPA), the first isolated antibiotic natural product in the world obtained from a culture of Penicillium brevicompactum in 1893. MpaA is a Golgi apparatus-associated enzyme that catalyzes the prenylation of 5,7-dihydroxy-4,6-dimethylphthalide (DHMP) to yield farnesyl-DHMP (FDHMP). The first step of the pathway is the synthesis of 5-methylorsellinic acid (5MOA) by the cytosolic polyketide synthase mpaC. 5MOA is then converted to the phthalide compound 5,7-dihydroxy-4,6-dimethylphthalide (DHMP) by the endoplasmic reticulum-bound cytochrome P450 monooxygenase mpaDE. MpaDE first catalyzes hydroxylation of 5-MOA to 4,6-dihydroxy-2-(hydroxymethyl)-3-methylbenzoic acid (DHMB). MpaDE then acts as a lactone synthase that catalyzes the ring closure to convert DHMB into DHMP. The next step is the prenylation of DHMP by the Golgi apparatus-associated prenyltransferase mpaA to yield farnesyl-DHMP (FDHMP). The ER-bound oxygenase mpaB then mediates the oxidative cleavage the C19-C20 double bond in FDHMP to yield FDHMP-3C via a mycophenolic aldehyde intermediate. The O-methyltransferase mpaG catalyzes the methylation of FDHMP-3C to yield MFDHMP-3C. After the cytosolic methylation of FDHMP-3C, MFDHMP-3C enters into peroxisomes probably via free diffusion due to its low molecular weight. Upon a peroxisomal CoA ligation reaction, catalyzed by a beta-oxidation component enzyme acyl-CoA ligase ACL891, MFDHMP-3C-CoA would then be restricted to peroxisomes for the following beta-oxidation pathway steps. The peroxisomal beta-oxidation machinery than converts MFDHMP-3C-CoA into MPA_CoA, via a beta-oxidation chain-shortening process. Finally mpaH acts as a peroxisomal acyl-CoA hydrolase with high substrate specificity toward MPA-CoA to release the final product MPA. The polypeptide is Polyprenyl transferase mpaA (Penicillium brevicompactum).